A 360-amino-acid polypeptide reads, in one-letter code: Phospho-N-acetylmuramoyl-pentapeptide-transferase (360 aa).

10 helical membrane passes run 26–46 (AILG…KLIE), 74–94 (MGGL…GDLG), 97–117 (YVWV…IDDY), 134–154 (YILQ…TAAN), 168–188 (VMPQ…VGSS), 199–219 (GLAI…AYLS), 236–256 (SGEL…FLWF), 263–283 (VFMG…IAVL), 288–308 (ILLV…ILQV), and 338–358 (VIVR…ATLK).

This sequence belongs to the glycosyltransferase 4 family. MraY subfamily. Mg(2+) serves as cofactor.

The protein resides in the cell inner membrane. The enzyme catalyses UDP-N-acetyl-alpha-D-muramoyl-L-alanyl-gamma-D-glutamyl-meso-2,6-diaminopimeloyl-D-alanyl-D-alanine + di-trans,octa-cis-undecaprenyl phosphate = di-trans,octa-cis-undecaprenyl diphospho-N-acetyl-alpha-D-muramoyl-L-alanyl-D-glutamyl-meso-2,6-diaminopimeloyl-D-alanyl-D-alanine + UMP. It participates in cell wall biogenesis; peptidoglycan biosynthesis. Functionally, catalyzes the initial step of the lipid cycle reactions in the biosynthesis of the cell wall peptidoglycan: transfers peptidoglycan precursor phospho-MurNAc-pentapeptide from UDP-MurNAc-pentapeptide onto the lipid carrier undecaprenyl phosphate, yielding undecaprenyl-pyrophosphoryl-MurNAc-pentapeptide, known as lipid I. This is Phospho-N-acetylmuramoyl-pentapeptide-transferase from Shewanella baltica (strain OS195).